Reading from the N-terminus, the 1324-residue chain is RNA2 polyprotein (1324 aa).

It belongs to the nepoviruses RNA2 polyprotein family. Specific enzymatic cleavages in vivo by the P1 encoded 3C-like protease yield mature proteins. In terms of processing, the N-terminus of the coat protein is blocked.

The protein resides in the host cell junction. It localises to the host plasmodesma. It is found in the host cytoplasm. Its subcellular location is the host nucleus. The protein localises to the virion. Implicated in RNA2 replication. Could also be required for nematode transmission of the virus. In terms of biological role, transports viral genome to neighboring plant cells directly through plasmosdesmata, without any budding. The movement protein allows efficient cell to cell propagation, by bypassing the host cell wall barrier. Acts by forming a tubular structure at the host plasmodesmata, enlarging it enough to allow free passage of virion capsids. This chain is RNA2 polyprotein, found in Apium graveolens (Celery).